The primary structure comprises 357 residues: Probable nitronate monooxygenase (357 aa).

Residues Asn71, Gln175, Gly180, Gly219, and 238–241 each bind FMN; that span reads QMGT.

The protein belongs to the nitronate monooxygenase family. NMO class I subfamily. It depends on FMN as a cofactor.

The catalysed reaction is 3 propionate 3-nitronate + 3 O2 + H2O = 3 3-oxopropanoate + 2 nitrate + nitrite + H2O2 + 3 H(+). Nitronate monooxygenase that uses molecular oxygen to catalyze the oxidative denitrification of alkyl nitronates. Acts on propionate 3-nitronate (P3N), the presumed physiological substrate. Probably functions in the detoxification of P3N, a metabolic poison produced by plants and fungi as a defense mechanism. This is Probable nitronate monooxygenase from Staphylococcus haemolyticus (strain JCSC1435).